A 237-amino-acid polypeptide reads, in one-letter code: Sugar fermentation stimulation protein homolog (237 aa).

It belongs to the SfsA family.

The chain is Sugar fermentation stimulation protein homolog from Synechocystis sp. (strain ATCC 27184 / PCC 6803 / Kazusa).